A 38-amino-acid chain; its full sequence is Humanin-like protein (38 aa).

As to expression, in the testis, expressed in Leydig cells at 10, 20 and 60 days of age (at protein level). Also expressed in pachytene spermatocytes at day 20 and in vessels, peritubular cells and spermatids at day 60. Not detected in Sertoli cells (at protein level). In the adult ovary, expressed in stromal cells, granulosa cells, theca cells and oocytes at diestrus and proestrus (at protein level). Expressed in the anterior pituitary where it is detected in lactotropes and somatotropes with lower levels in females than males (at protein level). In the hippocampus, expressed in astrocytes but not in neurons or oligodendrocytes (at protein level). Expressed in muscle, liver and hypothalamus but not in epididymal fat (at protein level). Widely expressed with highest levels in cardiac and skeletal muscle and lowest levels in lung, testis and uterus. In the CNS, levels are relatively high in the cerebellum and cortex and low in the hippocampus. In the hippocampus, lower levels are detected in ovariectomized animals than in controls.

It is found in the mitochondrion. The protein resides in the secreted. It localises to the cytoplasm. In terms of biological role, plays a role as a neuroprotective factor. Protects against neuronal cell death induced by amyloid-beta peptides. Also protects against excitotoxic cell death. Prevents amyloid-beta peptide-induced spatial learning and memory impairments, protects against amyloid-beta peptide-induced suppression of hippocampal long-term potentiation, and inhibits amyloid-beta peptide-induced activation of STAT3 and inhibition of CASP3. Prevents glutamate-induced dendritic atrophy in hippocampal neurons and also prevents glutamate-induced decrease in SYP puncta number and total puncta area. Protects anterior pituitary cells from TNF-induced apoptosis. Plays a role in ovarian follicle development by acting as a cryoprotective factor for granulosa cells in the antral follicle. Increases androgen production in Leydig cells and promotes Leydig cell survival by preventing apoptosis. This chain is Humanin-like protein, found in Rattus norvegicus (Rat).